The sequence spans 78 residues: uncharacterized protein (78 aa).

A run of 2 helical transmembrane segments spans residues 20–40 (SVYFPPFFKAFAFGFVIWLVV) and 57–77 (LLMDLSLFAICVCLALAILIA).

Its subcellular location is the cell membrane. This is an uncharacterized protein from Escherichia coli (strain K12).